The sequence spans 101 residues: uncharacterized protein (101 aa).

Residues 17–37 form a helical membrane-spanning segment; that stretch reads VIKILLISGISRIIILILAMF.

It is found in the endoplasmic reticulum membrane. This is an uncharacterized protein from Schizosaccharomyces pombe (strain 972 / ATCC 24843) (Fission yeast).